The chain runs to 245 residues: Adenosylcobinamide-GDP ribazoletransferase (245 aa).

Transmembrane regions (helical) follow at residues 31–51, 61–81, 113–133, 138–158, and 192–212; these read FGRAVLCYPLVGVLIGVVLYA, PLLQAALLLSLWVALSGALHL, VAVVVLVLVLLLKFSALAALL, AGLLPLAPWLARSSLPLLFLT, and LAFGLAGLLALLVTLMLFAWL.

The protein belongs to the CobS family. It depends on Mg(2+) as a cofactor.

The protein resides in the cell inner membrane. The enzyme catalyses alpha-ribazole + adenosylcob(III)inamide-GDP = adenosylcob(III)alamin + GMP + H(+). It catalyses the reaction alpha-ribazole 5'-phosphate + adenosylcob(III)inamide-GDP = adenosylcob(III)alamin 5'-phosphate + GMP + H(+). Its pathway is cofactor biosynthesis; adenosylcobalamin biosynthesis; adenosylcobalamin from cob(II)yrinate a,c-diamide: step 7/7. Joins adenosylcobinamide-GDP and alpha-ribazole to generate adenosylcobalamin (Ado-cobalamin). Also synthesizes adenosylcobalamin 5'-phosphate from adenosylcobinamide-GDP and alpha-ribazole 5'-phosphate. The protein is Adenosylcobinamide-GDP ribazoletransferase of Pseudomonas aeruginosa (strain ATCC 15692 / DSM 22644 / CIP 104116 / JCM 14847 / LMG 12228 / 1C / PRS 101 / PAO1).